We begin with the raw amino-acid sequence, 185 residues long: dCTP deaminase (185 aa).

DCTP is bound by residues 107 to 112 (KSTYAR), 131 to 133 (TLE), Q152, Y166, and Q176. Catalysis depends on E133, which acts as the Proton donor/acceptor.

It belongs to the dCTP deaminase family. Homotrimer.

The enzyme catalyses dCTP + H2O + H(+) = dUTP + NH4(+). The protein operates within pyrimidine metabolism; dUMP biosynthesis; dUMP from dCTP (dUTP route): step 1/2. Functionally, catalyzes the deamination of dCTP to dUTP. In Wolbachia sp. subsp. Brugia malayi (strain TRS), this protein is dCTP deaminase.